We begin with the raw amino-acid sequence, 784 residues long: LPS-assembly protein LptD (784 aa).

The N-terminal stretch at 1–24 is a signal peptide; the sequence is MKKRIPTLLATMIATALYSQQGLA. Disulfide bonds link C31/C724 and C173/C725.

Belongs to the LptD family. As to quaternary structure, component of the lipopolysaccharide transport and assembly complex. Interacts with LptE and LptA. Post-translationally, contains two intramolecular disulfide bonds.

The protein resides in the cell outer membrane. Functionally, together with LptE, is involved in the assembly of lipopolysaccharide (LPS) at the surface of the outer membrane. This is LPS-assembly protein LptD from Shigella sonnei (strain Ss046).